Reading from the N-terminus, the 652-residue chain is Transmembrane 9 superfamily member 12 (652 aa).

Positions Met1 to Gly20 are cleaved as a signal peptide. Residues Phe21–Trp286 lie on the Lumenal side of the membrane. The chain crosses the membrane as a helical span at residues Phe287 to Phe307. Over Leu308–Arg362 the chain is Cytoplasmic. The helical transmembrane segment at Ile363–Ser383 threads the bilayer. The Lumenal segment spans residues Arg384 to Met386. The chain crosses the membrane as a helical span at residues Leu387 to Val407. The Cytoplasmic segment spans residues Arg408 to Ser426. A helical membrane pass occupies residues Ile427–Trp447. At Ser448 to Tyr460 the chain is on the lumenal side. Residues Phe461–Leu481 traverse the membrane as a helical segment. Over Gly482–Leu510 the chain is Cytoplasmic. Residues Leu511 to Phe531 traverse the membrane as a helical segment. The Lumenal portion of the chain corresponds to Ser532 to Tyr541. The chain crosses the membrane as a helical span at residues Val542 to Val562. Topologically, residues Val563–Ala580 are cytoplasmic. Residues Phe581 to Phe601 form a helical membrane-spanning segment. Residues Asp602–Met613 are Lumenal-facing. A helical membrane pass occupies residues Leu614–Gly634. Residues Phe635–Asp652 are Cytoplasmic-facing. The short motif at Phe641–Phe646 is the Endoplasmic reticulum export signal element. The Golgi retention signal motif lies at Lys650–Asp652.

The protein belongs to the nonaspanin (TM9SF) (TC 9.A.2) family.

The protein resides in the endosome membrane. Its subcellular location is the golgi apparatus membrane. The polypeptide is Transmembrane 9 superfamily member 12 (Arabidopsis thaliana (Mouse-ear cress)).